The chain runs to 505 residues: Cytochrome P450 9b1 (505 aa).

Cys-449 contacts heme.

The protein belongs to the cytochrome P450 family. It depends on heme as a cofactor.

The protein localises to the endoplasmic reticulum membrane. The protein resides in the microsome membrane. Its function is as follows. May be involved in the metabolism of insect hormones and in the breakdown of synthetic insecticides. This Drosophila melanogaster (Fruit fly) protein is Cytochrome P450 9b1 (Cyp9b1).